Reading from the N-terminus, the 385-residue chain is DNA replication and repair protein RecF (385 aa).

30 to 37 (GPNGFGKT) lines the ATP pocket.

The protein belongs to the RecF family.

It is found in the cytoplasm. Functionally, the RecF protein is involved in DNA metabolism; it is required for DNA replication and normal SOS inducibility. RecF binds preferentially to single-stranded, linear DNA. It also seems to bind ATP. The chain is DNA replication and repair protein RecF from Mycobacterium marinum (strain ATCC BAA-535 / M).